A 493-amino-acid chain; its full sequence is uncharacterized protein (493 aa).

8–37 provides a ligand contact to FAD; the sequence is DFLVVGGGTCGCVVAARLSEDPSATVMLLE. The Proton acceptor role is filled by H429.

The protein belongs to the GMC oxidoreductase family. The cofactor is FAD.

This is an uncharacterized protein from Rhodococcus erythropolis (Arthrobacter picolinophilus).